A 439-amino-acid chain; its full sequence is Glutamate-1-semialdehyde 2,1-aminomutase (439 aa).

Lys273 bears the N6-(pyridoxal phosphate)lysine mark.

This sequence belongs to the class-III pyridoxal-phosphate-dependent aminotransferase family. HemL subfamily. Homodimer. Pyridoxal 5'-phosphate is required as a cofactor.

It is found in the cytoplasm. The enzyme catalyses (S)-4-amino-5-oxopentanoate = 5-aminolevulinate. Its pathway is porphyrin-containing compound metabolism; protoporphyrin-IX biosynthesis; 5-aminolevulinate from L-glutamyl-tRNA(Glu): step 2/2. The polypeptide is Glutamate-1-semialdehyde 2,1-aminomutase (Paenarthrobacter aurescens (strain TC1)).